Reading from the N-terminus, the 508-residue chain is Purine-cytosine permease fcyB (508 aa).

Over 1–72 (MAGAFDFDLE…AEQTDTSVFN (72 aa)) the chain is Cytoplasmic. Residues 73–93 (IGSMWLAANMVVSSFAIGVLG) traverse the membrane as a helical segment. Residues 94-104 (KSVYSLGFVDA) lie on the Extracellular side of the membrane. The helical transmembrane segment at 105 to 125 (ILTVLFFNLLGIMTVCFFSCF) threads the bilayer. Over 126–147 (GPFGLRQMVFSRLWFGWYVTKG) the chain is Cytoplasmic. A helical transmembrane segment spans residues 148-168 (FAVLNILACLGWSAANAIVGA). Residues 169–177 (QMLHAVNSD) lie on the Extracellular side of the membrane. The helical transmembrane segment at 178–198 (VPGFAAILIISICTLLVTFAG) threads the bilayer. Topologically, residues 199–200 (YK) are cytoplasmic. The helical transmembrane segment at 201 to 221 (VVHLYEYWSWIPTFIVFMIIL) threads the bilayer. The Extracellular portion of the chain corresponds to 222–243 (GTFAHSGDFQNIPMGVGTSEMG). A helical transmembrane segment spans residues 244–264 (SVLSFGSAVYGFATGWTSYAA). The Cytoplasmic segment spans residues 265–278 (DYTVYQPANRSKRK). Residues 279–299 (IFLSTWLGLIVPLLFVEMLGV) form a helical membrane-spanning segment. Residues 300–323 (AVMTATDIKGSKYDVGYATSGNGG) are Extracellular-facing. The helical transmembrane segment at 324–344 (LIAAVLQPLGGFGDFCLVILA) threads the bilayer. Residues 345 to 374 (LSIVANNCPNFYSVALTVQVLSRYAQRVPR) are Cytoplasmic-facing. Residues 375–395 (FIWTLFGTGVSIAIAIPGYSH) form a helical membrane-spanning segment. At 396-404 (FETVLENFM) the chain is on the extracellular side. The helical transmembrane segment at 405-425 (NFIAYWLAIYSAIAIMDHFVF) threads the bilayer. The Cytoplasmic segment spans residues 426 to 442 (KRGFSGYVVENFDKREK). Residues 443 to 463 (LPVGIAATIAFGFGVAGMITG) form a helical membrane-spanning segment. Residues 464-477 (MSQPWYVGPIARHA) lie on the Extracellular side of the membrane. The helical transmembrane segment at 478-498 (AGGDVGFELGFAFAAFSYLCL) threads the bilayer. The Cytoplasmic segment spans residues 499–508 (RPFEIKFFGR).

This sequence belongs to the purine-cytosine permease (2.A.39) family.

The protein localises to the cell membrane. In terms of biological role, this permease has a broad specificity towards purines, and also transports cytosine, but neither uracil nor thymine. Contributes very little in purine uptake. Its major role may be the uptake of cytosine. In Emericella nidulans (strain FGSC A4 / ATCC 38163 / CBS 112.46 / NRRL 194 / M139) (Aspergillus nidulans), this protein is Purine-cytosine permease fcyB (fcyB).